The primary structure comprises 87 residues: Mu-conotoxin cal12b (87 aa).

Residues 1–19 form the signal peptide; it reads MKLTCVLVVLLLLLPYGDL. Residues 20–42 constitute a propeptide that is removed on maturation; sequence ITNNYIRGAARKVTPWRRNLKTR. Cystine bridges form between C45/C58, C53/C70, C60/C75, and C69/C81. At W59 the chain carries 6'-bromotryptophan. Position 65 is a 4-hydroxyproline (P65). A 6'-bromotryptophan mark is found at W79 and W80. P82 is subject to 4-hydroxyproline. Residue W86 is modified to 6'-bromotryptophan.

As to expression, expressed by the venom duct.

The protein resides in the secreted. Its function is as follows. Mu-conotoxins block voltage-gated sodium channels. This toxin reversibly blocks voltage-gated sodium channel in cephalopods (tested on squid giant-fiber-lobe neurons) with an inhibitor constant (Ki) of 15 nmol/l, with no alteration in the voltage dependence of sodium conductance or on the kinetics of inactivation. Has no effect on sodium channels of the two gastropod S.luhuanus and A.californica (which are not natural prey). This Californiconus californicus (California cone) protein is Mu-conotoxin cal12b.